We begin with the raw amino-acid sequence, 350 residues long: Phosphatidylinositol transfer protein PDR17 (350 aa).

The CRAL-TRIO domain occupies 139–297 (KVAVENETGK…LYNGLLDFKY (159 aa)).

As to quaternary structure, interacts with phosphatidylserine decarboxylase PSD2. Also interacts with PBI1.

The protein resides in the cytoplasm. The protein localises to the microsome. The catalysed reaction is a 1,2-diacyl-sn-glycero-3-phospho-(1D-myo-inositol)(in) = a 1,2-diacyl-sn-glycero-3-phospho-(1D-myo-inositol)(out). Its function is as follows. Has phosphatidylinositol transfer activity. Involved in the regulation of the phospholipid composition of plasma- and endomembranes. Altering plasma membrane composition may provide a possible mechanism for multidrug resistance. Contributes to efficient phospholipase D1 activation and phospholipase B1 inhibition in the regulation of phospholipid turnover. Forms a complex with phosphatidylserine decarboxylase PSD2 that seems essential for maintenance of vacuolar phosphatidylethanolamine (PE) levels. Allows interorganelle phosphatidylserine (PtdSer) transport via a process that involves the acceptor membrane complex PDR17-PDS2 that binds to PBI1 which in turn ligates to SCS2 and phosphatidic acid present in the donor membrane, forming a zone of apposition that facilitates PtdSer transfer. This is Phosphatidylinositol transfer protein PDR17 from Saccharomyces cerevisiae (strain ATCC 204508 / S288c) (Baker's yeast).